The chain runs to 152 residues: Protein-export protein SecB (152 aa).

Belongs to the SecB family. In terms of assembly, homotetramer, a dimer of dimers. One homotetramer interacts with 1 SecA dimer.

Its subcellular location is the cytoplasm. Its function is as follows. One of the proteins required for the normal export of preproteins out of the cell cytoplasm. It is a molecular chaperone that binds to a subset of precursor proteins, maintaining them in a translocation-competent state. It also specifically binds to its receptor SecA. The protein is Protein-export protein SecB of Rickettsia typhi (strain ATCC VR-144 / Wilmington).